A 446-amino-acid polypeptide reads, in one-letter code: Tubulin beta chain (446 aa).

Gln-11, Glu-69, Ser-138, Gly-142, Thr-143, Gly-144, Asn-204, and Asn-226 together coordinate GTP. Glu-69 serves as a coordination point for Mg(2+). Residues 427-446 form a disordered region; the sequence is EAGVDEGEEFEEEEDFGDEQ. A compositionally biased stretch (acidic residues) spans 429–446; that stretch reads GVDEGEEFEEEEDFGDEQ.

It belongs to the tubulin family. As to quaternary structure, dimer of alpha and beta chains. A typical microtubule is a hollow water-filled tube with an outer diameter of 25 nm and an inner diameter of 15 nM. Alpha-beta heterodimers associate head-to-tail to form protofilaments running lengthwise along the microtubule wall with the beta-tubulin subunit facing the microtubule plus end conferring a structural polarity. Microtubules usually have 13 protofilaments but different protofilament numbers can be found in some organisms and specialized cells. The cofactor is Mg(2+).

Its subcellular location is the cytoplasm. It is found in the cytoskeleton. In terms of biological role, tubulin is the major constituent of microtubules, a cylinder consisting of laterally associated linear protofilaments composed of alpha- and beta-tubulin heterodimers. Microtubules grow by the addition of GTP-tubulin dimers to the microtubule end, where a stabilizing cap forms. Below the cap, tubulin dimers are in GDP-bound state, owing to GTPase activity of alpha-tubulin. The protein is Tubulin beta chain of Giardia intestinalis (Giardia lamblia).